A 632-amino-acid polypeptide reads, in one-letter code: tRNA uridine 5-carboxymethylaminomethyl modification enzyme MnmG (632 aa).

FAD-binding positions include 15-20, Ile-127, and Ser-182; that span reads GAGHAG. 276–290 is an NAD(+) binding site; it reads GPRYCPSIEDKIVRF. Position 373 (Gln-373) interacts with FAD.

It belongs to the MnmG family. As to quaternary structure, homodimer. Heterotetramer of two MnmE and two MnmG subunits. It depends on FAD as a cofactor.

It localises to the cytoplasm. In terms of biological role, NAD-binding protein involved in the addition of a carboxymethylaminomethyl (cmnm) group at the wobble position (U34) of certain tRNAs, forming tRNA-cmnm(5)s(2)U34. In Streptococcus pyogenes serotype M28 (strain MGAS6180), this protein is tRNA uridine 5-carboxymethylaminomethyl modification enzyme MnmG.